Reading from the N-terminus, the 154-residue chain is Protein SprT-like (154 aa).

The SprT-like domain maps to 6-144 (LQQLTETISL…CGTCHGKLKF (139 aa)). H67 provides a ligand contact to Zn(2+). E68 is an active-site residue. Position 71 (H71) interacts with Zn(2+).

This sequence belongs to the SprT family. Requires Zn(2+) as cofactor.

Its subcellular location is the cytoplasm. This Shouchella clausii (strain KSM-K16) (Alkalihalobacillus clausii) protein is Protein SprT-like.